The primary structure comprises 100 residues: Vesicle-associated membrane protein 3 (100 aa).

Residue S2 is modified to N-acetylserine. Over 2–77 (STGPTAATGS…KRKYWWKNCK (76 aa)) the chain is Cytoplasmic. A v-SNARE coiled-coil homology domain is found at 14 to 74 (RLQQTQNQVD…AKLKRKYWWK (61 aa)). Residues K66, K68, and K77 each participate in a glycyl lysine isopeptide (Lys-Gly) (interchain with G-Cter in ubiquitin) cross-link. A helical; Anchor for type IV membrane protein transmembrane segment spans residues 78 to 98 (MWAIGITVLVIFIIIIIVWVV). Residues 99–100 (SS) are Vesicular-facing.

The protein belongs to the synaptobrevin family. As to quaternary structure, interacts with POPDC1 (via the C-terminus cytoplasmic tail). Interacts with BCAP31; involved in VAMP3 export from the endoplasmic reticulum. Interacts with BAIAP3; this interaction is increased in the presence of calcium. Interacts with PICALM. Post-translationally, ubiquitinated by RNF167 at Lys-66, Lys-68 and Lys-77, regulating the recycling endosome pathway. In terms of processing, (Microbial infection) Targeted and hydrolyzed by C.botulinum neurotoxin type B (BoNT/B, botB) which hydrolyzes the 59-Gln-|-Phe-60 bond and probably inhibits neurotransmitter release. (Microbial infection) Targeted and hydrolyzed by C.botulinum neurotoxin type D (BoNT/D, botD) which hydrolyzes the 42-Lys-|-Leu-43 bond and probably inhibits neurotransmitter release. Note that humans are not known to be infected by C.botulinum type D. Post-translationally, (Microbial infection) Targeted and hydrolyzed by C.botulinum neurotoxin type F (BoNT/F, botF) which hydrolyzes the 41-Gln-|-Lys-42 bond and probably inhibits neurotransmitter release.

It is found in the early endosome membrane. Its subcellular location is the recycling endosome membrane. The protein resides in the synapse. It localises to the synaptosome. In terms of biological role, SNARE involved in vesicular transport from the late endosomes to the trans-Golgi network. The polypeptide is Vesicle-associated membrane protein 3 (VAMP3) (Homo sapiens (Human)).